Here is a 61-residue protein sequence, read N- to C-terminus: Photosystem II reaction center protein K (61 aa).

Residues 1–24 (MLNIFCLICICLNSTLYSSSFFFA) constitute a propeptide that is removed on maturation. A helical membrane pass occupies residues 32-52 (FFNPIIDVMPIIPVLFFLLAF).

The protein belongs to the PsbK family. As to quaternary structure, PSII is composed of 1 copy each of membrane proteins PsbA, PsbB, PsbC, PsbD, PsbE, PsbF, PsbH, PsbI, PsbJ, PsbK, PsbL, PsbM, PsbT, PsbX, PsbY, PsbZ, Psb30/Ycf12, at least 3 peripheral proteins of the oxygen-evolving complex and a large number of cofactors. It forms dimeric complexes.

It localises to the plastid. The protein localises to the chloroplast thylakoid membrane. Its function is as follows. One of the components of the core complex of photosystem II (PSII). PSII is a light-driven water:plastoquinone oxidoreductase that uses light energy to abstract electrons from H(2)O, generating O(2) and a proton gradient subsequently used for ATP formation. It consists of a core antenna complex that captures photons, and an electron transfer chain that converts photonic excitation into a charge separation. In Phalaenopsis aphrodite subsp. formosana (Moth orchid), this protein is Photosystem II reaction center protein K.